The sequence spans 286 residues: Ribose-5-phosphate isomerase (286 aa).

This sequence belongs to the ribose 5-phosphate isomerase family.

It localises to the cytoplasm. It carries out the reaction aldehydo-D-ribose 5-phosphate = D-ribulose 5-phosphate. It functions in the pathway carbohydrate degradation; pentose phosphate pathway; D-ribose 5-phosphate from D-ribulose 5-phosphate (non-oxidative stage): step 1/1. The chain is Ribose-5-phosphate isomerase (RKI1) from Mycosarcoma maydis (Corn smut fungus).